An 85-amino-acid polypeptide reads, in one-letter code: Alpha-defensin 14 (85 aa).

The first 11 residues, 1 to 11, serve as a signal peptide directing secretion; sequence ALVLLAFQVQA. The propeptide occupies 12–50; that stretch reads DPIQNTDEETKTEEQPGEDDQAVSVSFGDPEGSSLQEES. The disordered stretch occupies residues 13–48; sequence PIQNTDEETKTEEQPGEDDQAVSVSFGDPEGSSLQE. 3 disulfides stabilise this stretch: Cys56/Cys84, Cys58/Cys73, and Cys63/Cys83.

This sequence belongs to the alpha-defensin family. Paneth cells of the small bowel.

It is found in the secreted. Probably contributes to the antimicrobial barrier function of the small bowel mucosa. The sequence is that of Alpha-defensin 14 (Defa14) from Mus musculus (Mouse).